The sequence spans 255 residues: Isoprenyl transferase (255 aa).

D35 is an active-site residue. Residue D35 coordinates Mg(2+). Substrate-binding positions include 36–39 (GNGR), W40, R48, H52, and 80–82 (STE). N83 serves as the catalytic Proton acceptor. Residues W84, R86, R203, and 209–211 (RIS) contribute to the substrate site. E222 is a Mg(2+) binding site.

Belongs to the UPP synthase family. In terms of assembly, homodimer. It depends on Mg(2+) as a cofactor.

In terms of biological role, catalyzes the condensation of isopentenyl diphosphate (IPP) with allylic pyrophosphates generating different type of terpenoids. In Clostridium tetani (strain Massachusetts / E88), this protein is Isoprenyl transferase.